The following is a 461-amino-acid chain: Argininosuccinate lyase (461 aa).

Belongs to the lyase 1 family. Argininosuccinate lyase subfamily.

Its subcellular location is the cytoplasm. The catalysed reaction is 2-(N(omega)-L-arginino)succinate = fumarate + L-arginine. Its pathway is amino-acid biosynthesis; L-arginine biosynthesis; L-arginine from L-ornithine and carbamoyl phosphate: step 3/3. The polypeptide is Argininosuccinate lyase (Shewanella piezotolerans (strain WP3 / JCM 13877)).